The following is a 301-amino-acid chain: Pyridoxal 5'-phosphate synthase subunit PdxS (301 aa).

Position 31 (aspartate 31) interacts with D-ribose 5-phosphate. Residue lysine 88 is the Schiff-base intermediate with D-ribose 5-phosphate of the active site. D-ribose 5-phosphate is bound at residue glycine 160. Lysine 172 contacts D-glyceraldehyde 3-phosphate. D-ribose 5-phosphate is bound by residues glycine 221 and 242 to 243 (GS).

This sequence belongs to the PdxS/SNZ family. As to quaternary structure, in the presence of PdxT, forms a dodecamer of heterodimers.

It catalyses the reaction aldehydo-D-ribose 5-phosphate + D-glyceraldehyde 3-phosphate + L-glutamine = pyridoxal 5'-phosphate + L-glutamate + phosphate + 3 H2O + H(+). The protein operates within cofactor biosynthesis; pyridoxal 5'-phosphate biosynthesis. Functionally, catalyzes the formation of pyridoxal 5'-phosphate from ribose 5-phosphate (RBP), glyceraldehyde 3-phosphate (G3P) and ammonia. The ammonia is provided by the PdxT subunit. Can also use ribulose 5-phosphate and dihydroxyacetone phosphate as substrates, resulting from enzyme-catalyzed isomerization of RBP and G3P, respectively. The sequence is that of Pyridoxal 5'-phosphate synthase subunit PdxS from Methanosarcina acetivorans (strain ATCC 35395 / DSM 2834 / JCM 12185 / C2A).